The following is a 171-amino-acid chain: Ribulose bisphosphate carboxylase small subunit, chloroplastic (171 aa).

The N-terminal 50 residues, 1 to 50 (MATGAGAGAATVVSAFTGLKSTAQFPSSFKMSNAAAEWEQKTTSNGGRVR), are a transit peptide targeting the chloroplast.

Belongs to the RuBisCO small chain family. As to quaternary structure, heterohexadecamer of 8 large and 8 small subunits.

It localises to the plastid. Its subcellular location is the chloroplast. Its function is as follows. RuBisCO catalyzes two reactions: the carboxylation of D-ribulose 1,5-bisphosphate, the primary event in carbon dioxide fixation, as well as the oxidative fragmentation of the pentose substrate. Both reactions occur simultaneously and in competition at the same active site. Although the small subunit is not catalytic it is essential for maximal activity. The polypeptide is Ribulose bisphosphate carboxylase small subunit, chloroplastic (Pinus thunbergii (Japanese black pine)).